We begin with the raw amino-acid sequence, 370 residues long: Phospho-N-acetylmuramoyl-pentapeptide-transferase (370 aa).

A run of 10 helical transmembrane segments spans residues 29–49 (AGLTSMFITFIFGKSLISFLL), 70–90 (GTPTMGGLIMILSLTISTLLW), 93–113 (LSNWNVILLLISAILFAGLGF), 133–153 (KFIVTILFAVTITTLYFYYTG), 177–197 (GPVWNLGIFAVPFAIIVLIGS), 209–229 (GLASGTVVISTATFALIAYVS), 251–271 (VFLAGLSGALLGFLWFNCHPA), 273–293 (VFMGDTGSLFLGSTLGLVAIM), 298–318 (ILLVILGGIFVAEAVSVILQV), and 349–369 (VIRFWIIGIILAIITLSTLKI).

The protein belongs to the glycosyltransferase 4 family. MraY subfamily. Mg(2+) serves as cofactor.

The protein resides in the cell inner membrane. The enzyme catalyses UDP-N-acetyl-alpha-D-muramoyl-L-alanyl-gamma-D-glutamyl-meso-2,6-diaminopimeloyl-D-alanyl-D-alanine + di-trans,octa-cis-undecaprenyl phosphate = di-trans,octa-cis-undecaprenyl diphospho-N-acetyl-alpha-D-muramoyl-L-alanyl-D-glutamyl-meso-2,6-diaminopimeloyl-D-alanyl-D-alanine + UMP. It participates in cell wall biogenesis; peptidoglycan biosynthesis. Functionally, catalyzes the initial step of the lipid cycle reactions in the biosynthesis of the cell wall peptidoglycan: transfers peptidoglycan precursor phospho-MurNAc-pentapeptide from UDP-MurNAc-pentapeptide onto the lipid carrier undecaprenyl phosphate, yielding undecaprenyl-pyrophosphoryl-MurNAc-pentapeptide, known as lipid I. In Leptospira biflexa serovar Patoc (strain Patoc 1 / Ames), this protein is Phospho-N-acetylmuramoyl-pentapeptide-transferase.